Here is a 335-residue protein sequence, read N- to C-terminus: Lipoyl synthase (335 aa).

Polar residues predominate over residues 1-13; sequence MTIDTNPESSTPS. Residues 1 to 29 form a disordered region; sequence MTIDTNPESSTPSAPAYNPSEKQKGSAKT. Residues cysteine 75, cysteine 80, cysteine 86, cysteine 101, cysteine 105, cysteine 108, and serine 315 each contribute to the [4Fe-4S] cluster site. Residues 86-304 form the Radical SAM core domain; sequence CFGKGTATFM…EEEAYKMGFA (219 aa).

It belongs to the radical SAM superfamily. Lipoyl synthase family. The cofactor is [4Fe-4S] cluster.

The protein resides in the cytoplasm. The enzyme catalyses [[Fe-S] cluster scaffold protein carrying a second [4Fe-4S](2+) cluster] + N(6)-octanoyl-L-lysyl-[protein] + 2 oxidized [2Fe-2S]-[ferredoxin] + 2 S-adenosyl-L-methionine + 4 H(+) = [[Fe-S] cluster scaffold protein] + N(6)-[(R)-dihydrolipoyl]-L-lysyl-[protein] + 4 Fe(3+) + 2 hydrogen sulfide + 2 5'-deoxyadenosine + 2 L-methionine + 2 reduced [2Fe-2S]-[ferredoxin]. Its pathway is protein modification; protein lipoylation via endogenous pathway; protein N(6)-(lipoyl)lysine from octanoyl-[acyl-carrier-protein]: step 2/2. Catalyzes the radical-mediated insertion of two sulfur atoms into the C-6 and C-8 positions of the octanoyl moiety bound to the lipoyl domains of lipoate-dependent enzymes, thereby converting the octanoylated domains into lipoylated derivatives. The protein is Lipoyl synthase of Herminiimonas arsenicoxydans.